Consider the following 256-residue polypeptide: Chorismate mutase (256 aa).

Positions Phe3 to Glu255 constitute a Chorismate mutase domain. L-tyrosine is bound by residues Arg75 and Arg76. 4 residues coordinate L-tryptophan: Asn138, Asn139, Gly141, and Ser142. Residues Asn139, Gly141, Ser142, and Thr145 each coordinate L-tyrosine.

Homodimer.

The protein resides in the cytoplasm. The catalysed reaction is chorismate = prephenate. It participates in metabolic intermediate biosynthesis; prephenate biosynthesis; prephenate from chorismate: step 1/1. Its activity is regulated as follows. Each dimer has two allosteric binding sites that can bind the regulatory effectors tryptophan or tyrosine. Can bind either one tryptophan or one tyrosine, two tryptophan or two tyrosine or one tryptophan and one tyrosine, which differentially affect the catalytic activity. Activated by tryptophan and subject to feedback inhibition by tyrosine. In the presence of both tryptophan and tyrosine, the enzyme is in the activated state. Functionally, catalyzes the Claisen rearrangement of chorismate to prephenate. Acts at the first branch point in the aromatic amino acid pathway where it steers biosynthesis towards phenylalanine and tyrosine, and away from tryptophan. The protein is Chorismate mutase of Saccharomyces cerevisiae (strain ATCC 204508 / S288c) (Baker's yeast).